We begin with the raw amino-acid sequence, 542 residues long: CTP synthase (542 aa).

Residues Met-1–Ile-265 are amidoligase domain. Ser-13 lines the CTP pocket. UTP is bound at residue Ser-13. Residue Ser-14–Ile-19 coordinates ATP. Residue Tyr-54 coordinates L-glutamine. An ATP-binding site is contributed by Asp-71. Asp-71 and Glu-139 together coordinate Mg(2+). Residues Asp-146–Glu-148, Lys-186–Gln-191, and Lys-222 contribute to the CTP site. Residues Lys-186–Gln-191 and Lys-222 contribute to the UTP site. Residues Thr-291–Leu-541 enclose the Glutamine amidotransferase type-1 domain. Position 353 (Gly-353) interacts with L-glutamine. The active-site Nucleophile; for glutamine hydrolysis is the Cys-380. L-glutamine is bound by residues Phe-381–Gln-384, Glu-404, and Arg-469. Catalysis depends on residues His-514 and Glu-516.

The protein belongs to the CTP synthase family. As to quaternary structure, homotetramer.

The catalysed reaction is UTP + L-glutamine + ATP + H2O = CTP + L-glutamate + ADP + phosphate + 2 H(+). The enzyme catalyses L-glutamine + H2O = L-glutamate + NH4(+). It catalyses the reaction UTP + NH4(+) + ATP = CTP + ADP + phosphate + 2 H(+). It participates in pyrimidine metabolism; CTP biosynthesis via de novo pathway; CTP from UDP: step 2/2. With respect to regulation, allosterically activated by GTP, when glutamine is the substrate; GTP has no effect on the reaction when ammonia is the substrate. The allosteric effector GTP functions by stabilizing the protein conformation that binds the tetrahedral intermediate(s) formed during glutamine hydrolysis. Inhibited by the product CTP, via allosteric rather than competitive inhibition. Its function is as follows. Catalyzes the ATP-dependent amination of UTP to CTP with either L-glutamine or ammonia as the source of nitrogen. Regulates intracellular CTP levels through interactions with the four ribonucleotide triphosphates. In Brucella anthropi (strain ATCC 49188 / DSM 6882 / CCUG 24695 / JCM 21032 / LMG 3331 / NBRC 15819 / NCTC 12168 / Alc 37) (Ochrobactrum anthropi), this protein is CTP synthase.